The following is a 154-amino-acid chain: Endoribonuclease YbeY (154 aa).

Residues H114, H118, and H124 each contribute to the Zn(2+) site.

It belongs to the endoribonuclease YbeY family. The cofactor is Zn(2+).

The protein localises to the cytoplasm. In terms of biological role, single strand-specific metallo-endoribonuclease involved in late-stage 70S ribosome quality control and in maturation of the 3' terminus of the 16S rRNA. This Histophilus somni (strain 129Pt) (Haemophilus somnus) protein is Endoribonuclease YbeY.